The primary structure comprises 154 residues: UPF0178 protein SSP2038 (154 aa).

Belongs to the UPF0178 family.

This Staphylococcus saprophyticus subsp. saprophyticus (strain ATCC 15305 / DSM 20229 / NCIMB 8711 / NCTC 7292 / S-41) protein is UPF0178 protein SSP2038.